Reading from the N-terminus, the 174-residue chain is Glyoxylase I 4 (174 aa).

The VOC domain occupies 13–135 (SLNHVSVLCR…DGFMIEICNC (123 aa)). Glu131 (proton donor/acceptor) is an active-site residue.

Belongs to the glyoxalase I family. In terms of tissue distribution, mostly expressed in roots, and, to a lower extent, in leaves, flowers, seeds and siliques.

Its subcellular location is the cell membrane. It localises to the cytoplasm. Its function is as follows. Involved in the detoxification and scavenging of methylglyoxal (MG), a cytotoxic aldehyde produced in response to primary metabolism alteration observed during biotic and abiotic stresses. Modulates cross-talk between salicylic acid (SA) and jasmonic acid (JA) signaling pathways during defense responses to pathogens such as Botrytis cinerea. This chain is Glyoxylase I 4, found in Arabidopsis thaliana (Mouse-ear cress).